The following is a 338-amino-acid chain: DNA-directed RNA polymerase I subunit RPA43 (338 aa).

The segment at 209-338 (EVSEEVTENG…PKRKGKSNFL (130 aa)) is disordered. Ser242, Ser304, and Ser316 each carry phosphoserine. Thr322 is subject to Phosphothreonine. The residue at position 328 (Ser328) is a Phosphoserine. Positions 328–338 (SPKRKGKSNFL) are enriched in basic residues.

This sequence belongs to the eukaryotic RPA43 RNA polymerase subunit family. As to quaternary structure, component of the RNA polymerase I (Pol I) complex consisting of 13 subunits: a ten-subunit catalytic core composed of POLR1A/RPA1, POLR1B/RPA2, POLR1C/RPAC1, POLR1D/RPAC2, POLR1H/RPA12, POLR2E/RPABC1, POLR2F/RPABC2, POLR2H/RPABC3, POLR2K/RPABC4 and POLR2L/RPABC5; a mobile stalk subunit POLR1F/RPA43 protruding from the core and additional subunits homologous to general transcription factors POLR1E/RPA49 and POLR1G/RPA34. Interacts with RRN3/TIF-IA. In terms of tissue distribution, widely expressed. Expressed in all fetal and adult tissues tested, with highest expression in fetal lung, liver, and kidney, and low expression in all adult tissues.

The protein localises to the nucleus. Its subcellular location is the nucleolus. Its function is as follows. Component of RNA polymerase I (Pol I), a DNA-dependent RNA polymerase which synthesizes ribosomal RNA precursors using the four ribonucleoside triphosphates as substrates. Through its association with RRN3/TIF-IA may be involved in recruitment of Pol I to rDNA promoters. The sequence is that of DNA-directed RNA polymerase I subunit RPA43 from Homo sapiens (Human).